A 250-amino-acid polypeptide reads, in one-letter code: MFRATCNTRDFKKVINATSNLVDEICFEVDENGIKASAMDPSHVALVSMEMPKDVFEEYEGDVHDIGIDLEALKKIIARGKGDEKLILDLDAEKNKLNVTFKSNVTRKFSIALYDVSSSNLKVPDIEYPNNVSIKAGAFVEALKDAELVNDHITLKVDEDKFIIYSKGDLNQSETVFDNGVDDDDDTLAEFNMGEASRSTFNLAYLKDLTKSTAAEDLLKIYLGSDMPVKIEYEVSGSKLVFLLAPRIES.

It belongs to the PCNA family. Homotrimer. The subunits circularize to form a toroid; DNA passes through its center. Replication factor C (RFC) is required to load the toroid on the DNA.

Its function is as follows. Sliding clamp subunit that acts as a moving platform for DNA processing. Responsible for tethering the catalytic subunit of DNA polymerase and other proteins to DNA during high-speed replication. The sequence is that of DNA polymerase sliding clamp from Methanococcus maripaludis (strain C5 / ATCC BAA-1333).